The following is a 134-amino-acid chain: Transcription factor atoh7 (134 aa).

The interval M1–M27 is disordered. Residues S15–M27 are compositionally biased toward basic and acidic residues. Residues R28–L80 form the bHLH domain.

The protein localises to the nucleus. Its subcellular location is the perikaryon. It localises to the cell projection. The protein resides in the axon. Its function is as follows. Transcription factor that binds to DNA at the consensus sequence 5'-CAG[GC]TG-3'. Involved in the differentiation of retinal ganglion cells, photoreceptor population and optic nerve development. Required for retinal circadian rhythm photoentrainment. In Danio rerio (Zebrafish), this protein is Transcription factor atoh7.